A 274-amino-acid chain; its full sequence is 2,3,4,5-tetrahydropyridine-2,6-dicarboxylate N-succinyltransferase (274 aa).

Residues arginine 104 and aspartate 141 each contribute to the substrate site.

It belongs to the transferase hexapeptide repeat family. As to quaternary structure, homotrimer.

It is found in the cytoplasm. It catalyses the reaction (S)-2,3,4,5-tetrahydrodipicolinate + succinyl-CoA + H2O = (S)-2-succinylamino-6-oxoheptanedioate + CoA. Its pathway is amino-acid biosynthesis; L-lysine biosynthesis via DAP pathway; LL-2,6-diaminopimelate from (S)-tetrahydrodipicolinate (succinylase route): step 1/3. The chain is 2,3,4,5-tetrahydropyridine-2,6-dicarboxylate N-succinyltransferase from Shewanella putrefaciens (strain CN-32 / ATCC BAA-453).